Consider the following 1140-residue polypeptide: Protein FAM184A (1140 aa).

3 coiled-coil regions span residues alanine 57 to glutamine 256, alanine 296 to glutamate 800, and arginine 868 to lysine 907. The interval proline 1063 to proline 1128 is disordered.

This sequence belongs to the FAM184 family.

Its subcellular location is the cytoplasm. The protein resides in the P-body. It is found in the cytoskeleton. It localises to the microtubule organizing center. The protein localises to the centrosome. Its subcellular location is the centriolar satellite. The polypeptide is Protein FAM184A (Homo sapiens (Human)).